The primary structure comprises 268 residues: Ubiquinone biosynthesis protein COQ4 homolog 1, mitochondrial (268 aa).

Residues 1 to 10 (MFLRRVHPVR) are compositionally biased toward basic residues. Residues 1 to 18 (MFLRRVHPVRLGHASQRS) constitute a mitochondrion transit peptide. The tract at residues 1–44 (MFLRRVHPVRLGHASQRSLTTTKSRNESTTTTVEAPQAAPSPPP) is disordered. Positions 20 to 38 (TTTKSRNESTTTTVEAPQA) are enriched in low complexity. Zn(2+) contacts are provided by His177, Asp178, His181, and Glu193.

This sequence belongs to the COQ4 family. In terms of assembly, component of a multi-subunit COQ enzyme complex. The cofactor is Zn(2+).

The protein localises to the mitochondrion inner membrane. The enzyme catalyses a 4-hydroxy-3-methoxy-5-(all-trans-polyprenyl)benzoate + H(+) = a 2-methoxy-6-(all-trans-polyprenyl)phenol + CO2. It participates in cofactor biosynthesis; ubiquinone biosynthesis. Its function is as follows. Lyase that catalyzes the C1-decarboxylation of 4-hydroxy-3-methoxy-5-(all-trans-polyprenyl)benzoic acid into 2-methoxy-6-(all-trans-polyprenyl)phenol during ubiquinone biosynthesis. The protein is Ubiquinone biosynthesis protein COQ4 homolog 1, mitochondrial of Culex quinquefasciatus (Southern house mosquito).